We begin with the raw amino-acid sequence, 347 residues long: MDLQTQLQELKTSTQAKLAEMRGEHSKELQELRVAVLGKKGSLTELLKGLKDLPSEERPTVGKMVNEVRDVLTEAFDEAAKVVEAAKIQAQLDSESLDVTLPGRQVNLGNRHILSQIAEEIEDIFLGMGFQIVDGFEVETDYYNFERMNLPKDHPARDMQDTFYITEEILLRTHTSPVQARTLDKHDFSKGPLKMISPGRVFRRDTDDATHSHQFHQIEGLVVGKNISMGDLKGTLEMIIQKMFGAERQIRLRPSYFPFTEPSVEVDVSCFKCGGKGCNVCKKTGWIEILGAGMVHPQVLEMSGVDSEEYSGFAFGLGQERIAMLRYGINDIRSFYQGDVRFSEQFK.

Glu261 serves as a coordination point for Mg(2+).

Belongs to the class-II aminoacyl-tRNA synthetase family. Phe-tRNA synthetase alpha subunit type 1 subfamily. In terms of assembly, tetramer of two alpha and two beta subunits. Mg(2+) is required as a cofactor.

The protein resides in the cytoplasm. The enzyme catalyses tRNA(Phe) + L-phenylalanine + ATP = L-phenylalanyl-tRNA(Phe) + AMP + diphosphate + H(+). The sequence is that of Phenylalanine--tRNA ligase alpha subunit from Streptococcus thermophilus (strain CNRZ 1066).